The chain runs to 384 residues: Lipid-A-disaccharide synthase (384 aa).

This sequence belongs to the LpxB family.

The enzyme catalyses a lipid X + a UDP-2-N,3-O-bis[(3R)-3-hydroxyacyl]-alpha-D-glucosamine = a lipid A disaccharide + UDP + H(+). It participates in bacterial outer membrane biogenesis; LPS lipid A biosynthesis. Its function is as follows. Condensation of UDP-2,3-diacylglucosamine and 2,3-diacylglucosamine-1-phosphate to form lipid A disaccharide, a precursor of lipid A, a phosphorylated glycolipid that anchors the lipopolysaccharide to the outer membrane of the cell. This is Lipid-A-disaccharide synthase from Geobacter metallireducens (strain ATCC 53774 / DSM 7210 / GS-15).